The primary structure comprises 1361 residues: uncharacterized protein (1361 aa).

Belongs to the IIV-6 261R/396L/443R family.

This is an uncharacterized protein from Invertebrate iridescent virus 6 (IIV-6).